A 322-amino-acid chain; its full sequence is uncharacterized protein (322 aa).

A helical membrane pass occupies residues 212–234 (VCALLVGAISVATAGAAFSIIIV).

Its subcellular location is the membrane. This is an uncharacterized protein from Rickettsia prowazekii (strain Madrid E).